We begin with the raw amino-acid sequence, 600 residues long: Forkhead box protein O (600 aa).

Thr49 carries the post-translational modification Phosphothreonine; by PKB/AKT1. Phosphoserine is present on Ser80. Positions 100 to 206 (WGNLSYADLI…ETSRYEKRRG (107 aa)) form a DNA-binding region, fork-head. Disordered regions lie at residues 187–210 (KSVR…RAKK), 222–283 (GLND…LEPD), 319–364 (QQGF…TPGY), and 580–600 (LNAR…SWVH). A Phosphoserine; by PKB/AKT1 modification is found at Ser195. 2 stretches are compositionally biased toward polar residues: residues 226–235 (ATPSPSSSVS) and 261–270 (RASSNASSCG). Ser264 is subject to Phosphoserine; by PKB/AKT1. Phosphoserine occurs at positions 267, 268, and 273. Residues 330 to 342 (TQPPPPPYQPPQP) are compositionally biased toward pro residues. The span at 343–354 (QQQQQQGQQPSP) shows a compositional bias: low complexity.

In terms of assembly, interacts with melt.

It is found in the cytoplasm. The protein localises to the nucleus. Functionally, transcription factor involved in the regulation of the insulin signaling pathway. Consistently activates both the downstream target Thor\d4EBP and the feedback control target InR. Involved in negative regulation of the cell cycle, modulating cell growth and proliferation. In response to cellular stresses, such as nutrient deprivation or increased levels of reactive oxygen species, foxo is activated and inhibits growth through the action of target genes such as Thor. Foxo activated in the adult fat body can regulate lifespan in adults; an insulin peptide itself may function as one secondary messenger of insulin-regulated aging. Also regulates Lip4, homolog of human acid lipases, thereby acting as a key modulator of lipid metabolism by insulin signaling and integrates insulin responses to glucose and lipid homeostasis. In Drosophila ananassae (Fruit fly), this protein is Forkhead box protein O.